Here is a 168-residue protein sequence, read N- to C-terminus: Photosystem I assembly protein Ycf3 (168 aa).

3 TPR repeats span residues 35–68 (AFTY…EIDP), 72–105 (SYIL…NPFL), and 120–153 (GEQA…TPGN).

The protein belongs to the Ycf3 family.

It localises to the plastid. Its subcellular location is the chloroplast thylakoid membrane. In terms of biological role, essential for the assembly of the photosystem I (PSI) complex. May act as a chaperone-like factor to guide the assembly of the PSI subunits. This chain is Photosystem I assembly protein Ycf3, found in Helianthus annuus (Common sunflower).